The primary structure comprises 405 residues: Arrestin red cell isoform 2 (405 aa).

Belongs to the arrestin family.

Its subcellular location is the cytoplasm. The chain is Arrestin red cell isoform 2 from Oncorhynchus mykiss (Rainbow trout).